A 244-amino-acid chain; its full sequence is rRNA adenine N-6-methyltransferase (244 aa).

S-adenosyl-L-methionine is bound by residues asparagine 11, isoleucine 13, glycine 38, glutamate 59, aspartate 84, and asparagine 101.

It belongs to the class I-like SAM-binding methyltransferase superfamily. rRNA adenine N(6)-methyltransferase family.

The enzyme catalyses adenosine(2085) in 23S rRNA + 2 S-adenosyl-L-methionine = N(6)-dimethyladenosine(2085) in 23S rRNA + 2 S-adenosyl-L-homocysteine + 2 H(+). This protein produces a dimethylation of the adenine residue at position 2085 in 23S rRNA, resulting in reduced affinity between ribosomes and macrolide-lincosamide-streptogramin B antibiotics. This is rRNA adenine N-6-methyltransferase (ermC) from Staphylococcus aureus.